A 581-amino-acid polypeptide reads, in one-letter code: Semenogelin-2 (581 aa).

An N-terminal signal peptide occupies residues 1–23; that stretch reads MKSIILFVLSLLLILEKQAAVMG. Disordered regions lie at residues 24 to 62, 132 to 157, 173 to 194, and 271 to 581; these read QKGG…SKGS, GGKA…GISS, KEQA…QSSY, and NLNQ…PIST. Composition is skewed to polar residues over residues 138–157 and 174–194; these read GTQN…GISS and EQAS…QSSY. Positions 291–310 are enriched in basic and acidic residues; sequence HTEERQLNHGEKSVQKDISK. A compositionally biased stretch (polar residues) spans 324-333; that stretch reads KSQNQVTIHS. Residues 334–344 are compositionally biased toward basic and acidic residues; it reads QDQEHGHKENK. Over residues 366-396 the composition is skewed to polar residues; the sequence is KSVSKGSISIQTEEQIHGKSQNQVRIPSQAQ. Composition is skewed to basic and acidic residues over residues 412-425 and 455-464; these read TEER…KDIQ and DQEHGHKENK. Polar residues-rich tracts occupy residues 481–497 and 505–529; these read GKNT…SFQT and SQIQ…SGQS. Composition is skewed to basic and acidic residues over residues 530–545 and 558–581; these read ADRE…KGRY and TEHE…PIST.

It belongs to the semenogelin family. Interacts with SERPINA5.

It is found in the secreted. Its function is as follows. Participates in the formation of a gel matrix (sperm coagulum) entrapping the accessory gland secretions and ejaculated spermatozoa. In Pongo abelii (Sumatran orangutan), this protein is Semenogelin-2 (SEMG2).